Reading from the N-terminus, the 339-residue chain is Protein FAM50A (339 aa).

Positions 1–31 (MAQYKGAASEAGRAMHLMKKREKQREQMEQM) are disordered. At Ala-2 the chain carries N-acetylalanine. Lys-100 participates in a covalent cross-link: Glycyl lysine isopeptide (Lys-Gly) (interchain with G-Cter in SUMO2). Residues 150–177 (TTKKKKLGKNPDVDTSFLPDRDREEEEN) are disordered. The Nuclear localization signal motif lies at 152–155 (KKKK). Over residues 168 to 177 (PDRDREEEEN) the composition is skewed to basic and acidic residues.

This sequence belongs to the FAM50 family. As to quaternary structure, interacts with EFTUD2, a component of the spliceosome U5 complex. Interacts with DDX41, a component of the spliceosome C complex. In terms of tissue distribution, widely expressed in embryonic and adult tissues.

It localises to the nucleus. Its function is as follows. Probably involved in the regulation of pre-mRNA splicing. The sequence is that of Protein FAM50A (Fam50a) from Mus musculus (Mouse).